The chain runs to 900 residues: Methionine--tRNA ligase, cytoplasmic (900 aa).

One can recognise a GST C-terminal domain in the interval 74-198 (GWEQDDLTNQ…VLKQQGVLAL (125 aa)). A 'HIGH' region motif is present at residues 273–283 (PYVNNVPHLGN). Residues 593-597 (KFSKS) carry the 'KMSKS' region motif. Residue Lys-596 coordinates ATP. The residue at position 825 (Ser-825) is a Phosphoserine. Thr-835 is subject to Phosphothreonine. A WHEP-TRS domain is found at 841–897 (QIQALMDEVTKQGNIVRELKAQKADKNEVAAEVAKLLDLKKQLAVAEGKPPEAPKGK).

Belongs to the class-I aminoacyl-tRNA synthetase family. In terms of assembly, monomer. Part of a multisubunit complex that groups tRNA ligases for Arg (RARS1), Asp (DARS1), Gln (QARS1), Ile (IARS1), Leu (LARS1), Lys (KARS1), Met (MARS1) the bifunctional ligase for Glu and Pro (EPRS1) and the auxiliary subunits AIMP1/p43, AIMP2/p38 and EEF1E1/p18. Forms a linear complex that contains MARS1, EEF1E1, EPRS1 and AIMP2 that is at the core of the multisubunit complex.

The protein localises to the cytoplasm. The protein resides in the cytosol. It localises to the nucleus. Its subcellular location is the nucleolus. It carries out the reaction tRNA(Met) + L-methionine + ATP = L-methionyl-tRNA(Met) + AMP + diphosphate. Enzyme activity is increased by spermidine, EEF1A1, and when the Mg(2+) concentration is increased from 5 mM to 13 mM (in vitro), possibly by promoting the dissociation of the complex between the enzyme and its product. Its function is as follows. Catalyzes the specific attachment of an amino acid to its cognate tRNA in a 2 step reaction: the amino acid (AA) is first activated by ATP to form AA-AMP and then transferred to the acceptor end of the tRNA. Plays a role in the synthesis of ribosomal RNA in the nucleolus. This Homo sapiens (Human) protein is Methionine--tRNA ligase, cytoplasmic.